Reading from the N-terminus, the 239-residue chain is Venom nerve growth factor (239 aa).

Residues 1–18 (MSMLCYTLIIAFLIGIWA) form the signal peptide. The propeptide occupies 19–125 (APKSEDNVPL…ALNRNIQAKR (107 aa)). Positions 47–66 (GLKTSRNTDQRHPAPKKADD) are enriched in basic and acidic residues. Positions 47–68 (GLKTSRNTDQRHPAPKKADDQE) are disordered. Intrachain disulfides connect C139–C203, C181–C231, and C191–C233.

Belongs to the NGF-beta family. In terms of assembly, homodimer; non-covalently linked. As to expression, expressed by the venom gland.

It is found in the secreted. Its function is as follows. Nerve growth factor is important for the development and maintenance of the sympathetic and sensory nervous systems. It stimulates division and differentiation of sympathetic and embryonic sensory neurons as well as basal forebrain cholinergic neurons in the brain. Its relevance in the snake venom is not clear. However, it has been shown to inhibit metalloproteinase-dependent proteolysis of platelet glycoprotein Ib alpha, suggesting a metalloproteinase inhibition to prevent metalloprotease autodigestion and/or protection against prey proteases. Binds a lipid between the two protein chains in the homodimer. The lipid-bound form promotes histamine relase from mouse mast cells, contrary to the lipid-free form. The chain is Venom nerve growth factor from Pseudechis porphyriacus (Red-bellied black snake).